Reading from the N-terminus, the 314-residue chain is MAQFQIECVESSTRKNQQQYSKFSLEPLDRGQGTTVGNALRRVLLSNLPGAAVTAIRIAGVNHEFATILGVREDVLEIMLNMKELVLKSYTDQPQIGRLTAIGPGTVTAAQFEVPSEVEVIDPNQYIATLAEGAKLEMEFRVERGVGYRVIERGKDENSSLDFLQIDSVFMPVTKVNYTVEDIRADGMSPKDRLILDIWTNGSIQPREALSEASDIIANLFIPLKDLNELEAAHSDYQDEVNPESQIPIEELQLSVRAYNCLKRAQINSVADLLEYSQEDLLEIKNFGLKSAEEVIEALQKRLGITLPHEKAKA.

The segment at M1 to N228 is alpha N-terminal domain (alpha-NTD). The segment at P243–A314 is alpha C-terminal domain (alpha-CTD).

It belongs to the RNA polymerase alpha chain family. In terms of assembly, homodimer. In cyanobacteria the RNAP catalytic core is composed of 2 alpha, 1 beta, 1 beta', 1 gamma and 1 omega subunit. When a sigma factor is associated with the core the holoenzyme is formed, which can initiate transcription.

The catalysed reaction is RNA(n) + a ribonucleoside 5'-triphosphate = RNA(n+1) + diphosphate. Functionally, DNA-dependent RNA polymerase catalyzes the transcription of DNA into RNA using the four ribonucleoside triphosphates as substrates. In Synechocystis sp. (strain ATCC 27184 / PCC 6803 / Kazusa), this protein is DNA-directed RNA polymerase subunit alpha.